Consider the following 472-residue polypeptide: Adenosylhomocysteinase (472 aa).

Positions 63, 138, and 198 each coordinate substrate. 199–201 (TTT) lines the NAD(+) pocket. Lys228 and Asp232 together coordinate substrate. NAD(+) is bound by residues Asn233, 262-267 (GYGDVG), Glu285, Asn320, 341-343 (IGH), and Asn386.

This sequence belongs to the adenosylhomocysteinase family. Requires NAD(+) as cofactor.

Its subcellular location is the cytoplasm. It carries out the reaction S-adenosyl-L-homocysteine + H2O = L-homocysteine + adenosine. Its pathway is amino-acid biosynthesis; L-homocysteine biosynthesis; L-homocysteine from S-adenosyl-L-homocysteine: step 1/1. Functionally, may play a key role in the regulation of the intracellular concentration of adenosylhomocysteine. The protein is Adenosylhomocysteinase of Methylococcus capsulatus (strain ATCC 33009 / NCIMB 11132 / Bath).